Consider the following 25-residue polypeptide: Large ribosomal subunit protein uL30 (25 aa).

The protein belongs to the universal ribosomal protein uL30 family. Part of the 50S ribosomal subunit.

In Pseudomonas fluorescens biotype A, this protein is Large ribosomal subunit protein uL30 (rpmD).